The primary structure comprises 210 residues: Cytochrome c biogenesis ATP-binding export protein CcmA (210 aa).

Positions 3 to 209 (LTVTNLACAR…PADDPFAGVT (207 aa)) constitute an ABC transporter domain. 35 to 42 (GPNGIGKT) lines the ATP pocket.

The protein belongs to the ABC transporter superfamily. CcmA exporter (TC 3.A.1.107) family. As to quaternary structure, the complex is composed of two ATP-binding proteins (CcmA) and two transmembrane proteins (CcmB).

The protein localises to the cell inner membrane. It catalyses the reaction heme b(in) + ATP + H2O = heme b(out) + ADP + phosphate + H(+). Part of the ABC transporter complex CcmAB involved in the biogenesis of c-type cytochromes; once thought to export heme, this seems not to be the case, but its exact role is uncertain. Responsible for energy coupling to the transport system. The sequence is that of Cytochrome c biogenesis ATP-binding export protein CcmA from Cereibacter sphaeroides (strain ATCC 17023 / DSM 158 / JCM 6121 / CCUG 31486 / LMG 2827 / NBRC 12203 / NCIMB 8253 / ATH 2.4.1.) (Rhodobacter sphaeroides).